A 1370-amino-acid polypeptide reads, in one-letter code: Zinc finger MYM-type protein 3 (1370 aa).

Low complexity-rich tracts occupy residues 1–12 (MDPSDFPSPFDP), 40–56 (APSRGWAPPGPSPSSGA), and 130–146 (GAGASPPSPEGLLEPLA). 2 disordered regions span residues 1-73 (MDPS…PGGV) and 85-310 (GLLY…MGTK). Over residues 227–255 (TGKEIEKPPERVQKRSERVRRAEPPKPEV) the composition is skewed to basic and acidic residues. Phosphoserine occurs at positions 265 and 269. Over residues 265–281 (SDEDSDAMVDDPNDEDF) the composition is skewed to acidic residues. Glycyl lysine isopeptide (Lys-Gly) (interchain with G-Cter in SUMO2) cross-links involve residues lysine 310, lysine 322, and lysine 330. MYM-type zinc fingers lie at residues 334–368 (QLFCSSSCLTTYSKKPLGRKTCTFCKKEIWNTKDS), 380–424 (HEFC…LHEV), 431–466 (HRLCSDSCFSKFRANKGLKTNCCDQCGAYIYARPGG), 479–513 (KRFCNTTCLGAYKKKNTRVYPCVWCKTLCKNFEML), 523–561 (SLFCSLCCTTSYKVKQAGLTGPPRPCSFCRRSLSDPCYY), 569–606 (YQFCSPSCWTKFQHTSPEGGIHLSCHYCHSLFSGKPEV), 614–648 (FQFCCRDCCEDFKRLRGVVSQCEHCRQEKLLHEKL), 655–694 (KSFCSEGCVLLYKQDFTKKLGLCCITCTYCSQTCQRGVTE), and 701–735 (WDFCSEDCKTKYLLWYCKAARCHACKRQGKLLETI). Polar residues predominate over residues 761–789 (NLDTQSGPESLLNSQSSESKPQTPSQTKV). Residues 761–831 (NLDTQSGPES…PPPPATPRKN (71 aa)) form a disordered region. Glycyl lysine isopeptide (Lys-Gly) (interchain with G-Cter in SUMO2) cross-links involve residues lysine 780 and lysine 788. The segment covering 790–799 (ENNHTVRTPD) has biased composition (basic and acidic residues). Threonine 797 is subject to Phosphothreonine. Lysine 806 participates in a covalent cross-link: Glycyl lysine isopeptide (Lys-Gly) (interchain with G-Cter in SUMO2). Pro residues predominate over residues 816 to 827 (VPTPPPPPPPAT). Residues threonine 818 and threonine 827 each carry the phosphothreonine modification. Glycyl lysine isopeptide (Lys-Gly) (interchain with G-Cter in SUMO2) cross-links involve residues lysine 848, lysine 862, lysine 921, and lysine 1276.

As to quaternary structure, may be a component of a BHC histone deacetylase complex that contains HDAC1, HDAC2, HMG20B/BRAF35, KDM1A, RCOR1/CoREST, PHF21A/BHC80, ZMYM2, ZNF217, ZMYM3, GSE1 and GTF2I. In terms of tissue distribution, ubiquitously expressed in all embryonic stages and adult tissues.

The protein localises to the nucleus. Plays a role in the regulation of cell morphology and cytoskeletal organization. In Mus musculus (Mouse), this protein is Zinc finger MYM-type protein 3 (Zmym3).